Reading from the N-terminus, the 61-residue chain is Metallothionein (61 aa).

M1 is modified (N-acetylmethionine). Residues M1–C29 are beta. Residues C5, C7, C13, C15, C19, C21, C24, C26, C29, C33, C34, C36, C37, C41, C44, C48, C50, C57, C59, and C60 each contribute to the a divalent metal cation site. The interval K30 to A61 is alpha.

This sequence belongs to the metallothionein superfamily. Type 1 family. As to quaternary structure, monomer.

Functionally, metallothioneins have a high content of cysteine residues that bind various heavy metals. The protein is Metallothionein of Balaena mysticetus (Bowhead whale).